The chain runs to 371 residues: Methionine import ATP-binding protein MetN (371 aa).

In terms of domain architecture, ABC transporter spans isoleucine 29–valine 270. Residue glycine 67–serine 74 participates in ATP binding.

This sequence belongs to the ABC transporter superfamily. Methionine importer (TC 3.A.1.24) family. In terms of assembly, the complex is composed of two ATP-binding proteins (MetN), two transmembrane proteins (MetI) and a solute-binding protein (MetQ).

The protein resides in the cell inner membrane. The enzyme catalyses L-methionine(out) + ATP + H2O = L-methionine(in) + ADP + phosphate + H(+). It carries out the reaction D-methionine(out) + ATP + H2O = D-methionine(in) + ADP + phosphate + H(+). In terms of biological role, part of the ABC transporter complex MetNIQ involved in methionine import. Responsible for energy coupling to the transport system. The chain is Methionine import ATP-binding protein MetN from Rhodopseudomonas palustris (strain BisA53).